The primary structure comprises 345 residues: S-adenosylmethionine:tRNA ribosyltransferase-isomerase (345 aa).

It belongs to the QueA family. Monomer.

It is found in the cytoplasm. It carries out the reaction 7-aminomethyl-7-carbaguanosine(34) in tRNA + S-adenosyl-L-methionine = epoxyqueuosine(34) in tRNA + adenine + L-methionine + 2 H(+). It participates in tRNA modification; tRNA-queuosine biosynthesis. Functionally, transfers and isomerizes the ribose moiety from AdoMet to the 7-aminomethyl group of 7-deazaguanine (preQ1-tRNA) to give epoxyqueuosine (oQ-tRNA). The chain is S-adenosylmethionine:tRNA ribosyltransferase-isomerase from Helicobacter pylori (strain P12).